A 162-amino-acid polypeptide reads, in one-letter code: Ribosome maturation factor RimM (162 aa).

The PRC barrel domain occupies 86–160; it reads EGRYYYFALI…GIHVDPIPGL (75 aa).

The protein belongs to the RimM family. As to quaternary structure, binds ribosomal protein uS19.

The protein resides in the cytoplasm. Functionally, an accessory protein needed during the final step in the assembly of 30S ribosomal subunit, possibly for assembly of the head region. Essential for efficient processing of 16S rRNA. May be needed both before and after RbfA during the maturation of 16S rRNA. It has affinity for free ribosomal 30S subunits but not for 70S ribosomes. The sequence is that of Ribosome maturation factor RimM from Thermus thermophilus (strain ATCC BAA-163 / DSM 7039 / HB27).